We begin with the raw amino-acid sequence, 476 residues long: Inactive glucose-1-phosphate adenylyltransferase small subunit 2, chloroplastic (476 aa).

The transit peptide at 1–55 (MQISSSSFITKFTNLHMVRSTSDHHQWRHNYNLKQLFIPNLSVSNSQHLPLNQSV) directs the protein to the chloroplast.

Belongs to the bacterial/plant glucose-1-phosphate adenylyltransferase family. Heterotetramer. In terms of tissue distribution, expressed at very low levels in leaves, inflorescences, fruits, and roots.

Its subcellular location is the plastid. It localises to the chloroplast. In Arabidopsis thaliana (Mouse-ear cress), this protein is Inactive glucose-1-phosphate adenylyltransferase small subunit 2, chloroplastic.